The primary structure comprises 572 residues: Proteinaceous RNase P 1, chloroplastic/mitochondrial (572 aa).

The N-terminal 70 residues, 1 to 70, are a transit peptide targeting the chloroplast and mitochondrion; that stretch reads MLRLTCFTPS…SRHLCTLPLA (70 aa). PPR repeat units lie at residues 96–130, 136–174, 175–209, and 210–244; these read PEAL…GVQL, NVLL…KVVP, NEAT…GIQP, and RLRS…EVVP. Residues 338–565 form the PRORP domain; it reads MDENGVCKCC…DLQTSRQWLC (228 aa). Cys-344 and Cys-347 together coordinate Zn(2+). Positions 399, 474, 475, and 493 each coordinate Mn(2+). The Zn(2+) site is built by His-548 and Cys-565.

The protein belongs to the PPR family. P subfamily. It depends on Mg(2+) as a cofactor. Mn(2+) is required as a cofactor.

It is found in the mitochondrion. It localises to the plastid. Its subcellular location is the chloroplast. The enzyme catalyses Endonucleolytic cleavage of RNA, removing 5'-extranucleotides from tRNA precursor.. Its function is as follows. Endonuclease RNase P responsible for the 5' maturation of tRNA precursors. Preferentially cleaves at the unusual cleavage site, but also able to cleave at the classical cleavage site. Also involved in the maturation of mRNAs in mitochondria. The chain is Proteinaceous RNase P 1, chloroplastic/mitochondrial (PRORP1) from Arabidopsis thaliana (Mouse-ear cress).